The chain runs to 119 residues: Large ribosomal subunit protein uL18 (119 aa).

It belongs to the universal ribosomal protein uL18 family. In terms of assembly, part of the 50S ribosomal subunit; part of the 5S rRNA/L5/L18/L25 subcomplex. Contacts the 5S and 23S rRNAs.

Its function is as follows. This is one of the proteins that bind and probably mediate the attachment of the 5S RNA into the large ribosomal subunit, where it forms part of the central protuberance. The sequence is that of Large ribosomal subunit protein uL18 from Cupriavidus metallidurans (strain ATCC 43123 / DSM 2839 / NBRC 102507 / CH34) (Ralstonia metallidurans).